The following is a 123-amino-acid chain: Small ribosomal subunit protein uS12 (123 aa).

The residue at position 89 (D89) is a 3-methylthioaspartic acid.

It belongs to the universal ribosomal protein uS12 family. Part of the 30S ribosomal subunit. Contacts proteins S8 and S17. May interact with IF1 in the 30S initiation complex.

In terms of biological role, with S4 and S5 plays an important role in translational accuracy. Its function is as follows. Interacts with and stabilizes bases of the 16S rRNA that are involved in tRNA selection in the A site and with the mRNA backbone. Located at the interface of the 30S and 50S subunits, it traverses the body of the 30S subunit contacting proteins on the other side and probably holding the rRNA structure together. The combined cluster of proteins S8, S12 and S17 appears to hold together the shoulder and platform of the 30S subunit. The chain is Small ribosomal subunit protein uS12 from Rhizobium meliloti (strain 1021) (Ensifer meliloti).